The following is a 194-amino-acid chain: Peptidyl-tRNA hydrolase (194 aa).

Histidine 17 provides a ligand contact to tRNA. The Proton acceptor role is filled by histidine 22. The tRNA site is built by phenylalanine 68, asparagine 70, and asparagine 116.

It belongs to the PTH family. As to quaternary structure, monomer.

The protein localises to the cytoplasm. It catalyses the reaction an N-acyl-L-alpha-aminoacyl-tRNA + H2O = an N-acyl-L-amino acid + a tRNA + H(+). Its function is as follows. Hydrolyzes ribosome-free peptidyl-tRNAs (with 1 or more amino acids incorporated), which drop off the ribosome during protein synthesis, or as a result of ribosome stalling. In terms of biological role, catalyzes the release of premature peptidyl moieties from peptidyl-tRNA molecules trapped in stalled 50S ribosomal subunits, and thus maintains levels of free tRNAs and 50S ribosomes. This is Peptidyl-tRNA hydrolase from Xanthomonas oryzae pv. oryzae (strain MAFF 311018).